The primary structure comprises 352 residues: Uroporphyrinogen decarboxylase (352 aa).

Substrate contacts are provided by residues 26–30 (RQAGR), Phe-45, Asp-76, Tyr-153, Ser-208, and His-323.

The protein belongs to the uroporphyrinogen decarboxylase family. As to quaternary structure, homodimer.

The protein resides in the cytoplasm. It catalyses the reaction uroporphyrinogen III + 4 H(+) = coproporphyrinogen III + 4 CO2. The protein operates within porphyrin-containing compound metabolism; protoporphyrin-IX biosynthesis; coproporphyrinogen-III from 5-aminolevulinate: step 4/4. In terms of biological role, catalyzes the decarboxylation of four acetate groups of uroporphyrinogen-III to yield coproporphyrinogen-III. This Parasynechococcus marenigrum (strain WH8102) protein is Uroporphyrinogen decarboxylase.